Consider the following 427-residue polypeptide: Acetyl-CoA acetyltransferase, mitochondrial (427 aa).

The transit peptide at 1 to 33 (MAVLAALLRSGARSRSPLLRRLVQEIRYVERSY) directs the protein to the mitochondrion. Lys66 bears the N6-acetyllysine; alternate mark. Residue Lys66 is modified to N6-succinyllysine; alternate. Lys78 is subject to N6-succinyllysine. Cys126 functions as the Acyl-thioester intermediate in the catalytic mechanism. An N6-acetyllysine; alternate mark is found at Lys174, Lys181, Lys190, and Lys202. N6-succinyllysine; alternate occurs at positions 174, 181, 190, and 202. Tyr219 is a binding site for CoA. Tyr219 is a binding site for K(+). 2 positions are modified to N6-acetyllysine; alternate: Lys223 and Lys230. An N6-succinyllysine; alternate mark is found at Lys223 and Lys230. The residue at position 243 (Lys243) is an N6-succinyllysine. Lys251 and Lys257 each carry N6-acetyllysine. CoA-binding positions include 258-260 (RVD) and Lys263. An N6-acetyllysine; alternate modification is found at Lys263. An N6-succinyllysine; alternate modification is found at Lys263. 2 positions are modified to N6-succinyllysine: Lys266 and Lys268. An N6-acetyllysine modification is found at Lys273. K(+) contacts are provided by Ala280, Ala281, and Ala283. Ser284 lines the CoA pocket. N6-acetyllysine is present on Lys338. Val381 contacts K(+). The Proton donor/acceptor role is filled by Cys413.

This sequence belongs to the thiolase-like superfamily. Thiolase family. Homotetramer. Post-translationally, succinylation at Lys-268, adjacent to a coenzyme A binding site. Desuccinylated by SIRT5.

It is found in the mitochondrion. The catalysed reaction is 2 acetyl-CoA = acetoacetyl-CoA + CoA. It catalyses the reaction propanoyl-CoA + acetyl-CoA = 2-methyl-3-oxobutanoyl-CoA + CoA. Its pathway is lipid metabolism; fatty acid beta-oxidation. Activated by potassium ions, but not sodium ions. This is one of the enzymes that catalyzes the last step of the mitochondrial beta-oxidation pathway, an aerobic process breaking down fatty acids into acetyl-CoA. Using free coenzyme A/CoA, catalyzes the thiolytic cleavage of medium- to long-chain 3-oxoacyl-CoAs into acetyl-CoA and a fatty acyl-CoA shortened by two carbon atoms. The activity of the enzyme is reversible and it can also catalyze the condensation of two acetyl-CoA molecules into acetoacetyl-CoA. Thereby, it plays a major role in ketone body metabolism. In Homo sapiens (Human), this protein is Acetyl-CoA acetyltransferase, mitochondrial (ACAT1).